We begin with the raw amino-acid sequence, 198 residues long: 3-isopropylmalate dehydratase small subunit (198 aa).

Belongs to the LeuD family. LeuD type 1 subfamily. In terms of assembly, heterodimer of LeuC and LeuD.

The enzyme catalyses (2R,3S)-3-isopropylmalate = (2S)-2-isopropylmalate. It functions in the pathway amino-acid biosynthesis; L-leucine biosynthesis; L-leucine from 3-methyl-2-oxobutanoate: step 2/4. In terms of biological role, catalyzes the isomerization between 2-isopropylmalate and 3-isopropylmalate, via the formation of 2-isopropylmaleate. In Mycobacterium leprae (strain Br4923), this protein is 3-isopropylmalate dehydratase small subunit.